Reading from the N-terminus, the 221-residue chain is Oxaloacetate tautomerase FAHD1, mitochondrial (221 aa).

The N-terminal 24 residues, 1–24 (MASTKPLSRFWEWGKNIVCVGRNY), are a transit peptide targeting the mitochondrion. Position 37 is a phosphoserine (Ser-37). 3 residues coordinate Mg(2+): Glu-68, Glu-70, and Asp-99. An N6-acetyllysine modification is found at Lys-110. The residue at position 112 (Lys-112) is an N6-succinyllysine.

Belongs to the FAH family. Homodimer. The cofactor is Mg(2+). Mn(2+) serves as cofactor.

It is found in the mitochondrion. It localises to the cytoplasm. Its subcellular location is the cytosol. The enzyme catalyses oxaloacetate = enol-oxaloacetate. It carries out the reaction oxaloacetate + H(+) = pyruvate + CO2. It catalyses the reaction a 3-acylpyruvate + H2O = a carboxylate + pyruvate + H(+). The catalysed reaction is acetylpyruvate + H2O = acetate + pyruvate + H(+). The enzyme catalyses 3-fumarylpyruvate + H2O = fumarate + pyruvate + H(+). With respect to regulation, oxaloacetate decarboxylation is competitively inhibited by oxalate. Tautomerase that converts enol-oxaloacetate, a strong inhibitor of succinate dehydrogenase, to the physiological keto form of oxaloacetate. It is thereby required to maximize aerobic respiration efficiency by preventing succinate dehydrogenase inhibition. Also acts as a weak oxaloacetate decarboxylase (ODx), catalyzing the decarboxylation of oxaloacetate (OAA) to pyruvate and CO(2), and as such is likely a regulatory enzyme in the TCA cycle. Also displays acylpyruvase activity, being able to hydrolyze acetylpyruvate and fumarylpyruvate in vitro. The sequence is that of Oxaloacetate tautomerase FAHD1, mitochondrial from Rattus norvegicus (Rat).